A 326-amino-acid polypeptide reads, in one-letter code: MSDNMEFPTKRMRRLRKSPQIRNILRETRLHPSDLIYPMFVSEKLGRGDVEAIDTMPGQFRYSVDDAVSEASRLEDEGLSSVLIFGMPSAKDELASAAHDPHGVVQRTVRRLKEETDLVVMTDVCLCQYTSHGHCGIVVDGEIVNDETLEVLSRIALSHAEAGADVVAPSDMMDGRVAAIRRSLDDAGFQDTLIMSYAVKYASAFYAPFRGAVSSAPAFGDRRSYQMDPANIDEALIEAELDLREGADILMVKPALAYLDVIGKVRERFSVPLAAYNVSGEYSMLKAAIKSGYLTDEAIYESILSIKRAGADLIISHFAPDLLGVI.

Cys125, Cys127, and Cys135 together coordinate Zn(2+). The active-site Schiff-base intermediate with substrate is the Lys200. Arg210 and Arg222 together coordinate 5-aminolevulinate. Position 238 (Glu238) interacts with Mg(2+). Lys253 serves as the catalytic Schiff-base intermediate with substrate. Ser279 provides a ligand contact to 5-aminolevulinate.

This sequence belongs to the ALAD family. Homooctamer. Zn(2+) serves as cofactor.

It carries out the reaction 2 5-aminolevulinate = porphobilinogen + 2 H2O + H(+). The protein operates within porphyrin-containing compound metabolism; protoporphyrin-IX biosynthesis; coproporphyrinogen-III from 5-aminolevulinate: step 1/4. Its function is as follows. Catalyzes an early step in the biosynthesis of tetrapyrroles. Binds two molecules of 5-aminolevulinate per subunit, each at a distinct site, and catalyzes their condensation to form porphobilinogen. The polypeptide is Delta-aminolevulinic acid dehydratase (hemB) (Methanothermobacter thermautotrophicus (strain ATCC 29096 / DSM 1053 / JCM 10044 / NBRC 100330 / Delta H) (Methanobacterium thermoautotrophicum)).